Here is a 257-residue protein sequence, read N- to C-terminus: Anamorsin homolog (257 aa).

Residues Met-1–Ser-132 are N-terminal SAM-like domain. The linker stretch occupies residues Arg-133 to Val-171. Residues Cys-181, Cys-190, Cys-193, and Cys-195 each coordinate [2Fe-2S] cluster. The tract at residues Cys-181–Cys-195 is fe-S binding site A. 4 residues coordinate [4Fe-4S] cluster: Cys-219, Cys-222, Cys-230, and Cys-233. 2 consecutive short sequence motifs (cx2C motif) follow at residues Cys-219–Cys-222 and Cys-230–Cys-233. The fe-S binding site B stretch occupies residues Cys-219 to Cys-233.

This sequence belongs to the anamorsin family. Monomer. The cofactor is [2Fe-2S] cluster. It depends on [4Fe-4S] cluster as a cofactor.

It is found in the cytoplasm. It localises to the mitochondrion intermembrane space. Functionally, component of the cytosolic iron-sulfur (Fe-S) protein assembly (CIA) machinery. Required for the maturation of extramitochondrial Fe-S proteins. Part of an electron transfer chain functioning in an early step of cytosolic Fe-S biogenesis, facilitating the de novo assembly of a [4Fe-4S] cluster on the cytosolic Fe-S scaffold complex. Electrons are transferred from NADPH via a FAD- and FMN-containing diflavin oxidoreductase. Together with the diflavin oxidoreductase, also required for the assembly of the diferric tyrosyl radical cofactor of ribonucleotide reductase (RNR), probably by providing electrons for reduction during radical cofactor maturation in the catalytic small subunit. This Ostreococcus lucimarinus (strain CCE9901) protein is Anamorsin homolog.